We begin with the raw amino-acid sequence, 118 residues long: UPF0102 protein RSal33209_1090 (118 aa).

The protein belongs to the UPF0102 family.

This Renibacterium salmoninarum (strain ATCC 33209 / DSM 20767 / JCM 11484 / NBRC 15589 / NCIMB 2235) protein is UPF0102 protein RSal33209_1090.